The chain runs to 538 residues: Cytochrome P450 monooxygenase xanG (538 aa).

A helical membrane pass occupies residues 44–64 (MILYYLASIPLAIICYLAWYL). Asn378 carries an N-linked (GlcNAc...) asparagine glycan. Cys489 is a heme binding site.

Belongs to the cytochrome P450 family. It depends on heme as a cofactor.

The protein resides in the membrane. Its pathway is secondary metabolite biosynthesis. Its function is as follows. Cytochrome P450 monooxygenase; part of the gene cluster that mediates the biosynthesis of the isocyanide xanthocillin and its derivatives. The first step of the pathway consists in the conversion of tyrosine into a vinyl-isonitrile intermediate by the isocyanide synthase xanB. Subsequent oxidative dimerization of this intermediate to form xanthocillin may involve the cytochrome P450 monooxygenase xanG, whose expression is coregulated with that of XanB. Xanthocillin can be further modified by the isonitrile hydratase-like protein xanA which introduces N-formyl groups and the methyltransferase xanE which introduces methyl groups, leading to the production of several derivatives including fumiformamide. Finally, fumiformamide can be subject to both oxidative and reductive cyclization to yield melanocins E and F, respectively. The sequence is that of Cytochrome P450 monooxygenase xanG from Aspergillus fumigatus (strain ATCC MYA-4609 / CBS 101355 / FGSC A1100 / Af293) (Neosartorya fumigata).